A 123-amino-acid polypeptide reads, in one-letter code: Large ribosomal subunit protein bL19 (123 aa).

Belongs to the bacterial ribosomal protein bL19 family.

Its function is as follows. This protein is located at the 30S-50S ribosomal subunit interface and may play a role in the structure and function of the aminoacyl-tRNA binding site. This Acinetobacter baylyi (strain ATCC 33305 / BD413 / ADP1) protein is Large ribosomal subunit protein bL19.